Here is a 415-residue protein sequence, read N- to C-terminus: Dihydroorotase (415 aa).

Residues His54 and His56 each contribute to the Zn(2+) site. Substrate contacts are provided by residues 56 to 58 (HFR) and Asn88. Zn(2+)-binding residues include Lys136, His169, His217, and Asp278. An N6-carboxylysine modification is found at Lys136. The active site involves Asp278. Residue His282 coordinates substrate.

Belongs to the metallo-dependent hydrolases superfamily. DHOase family. Class I DHOase subfamily. Zn(2+) serves as cofactor.

It catalyses the reaction (S)-dihydroorotate + H2O = N-carbamoyl-L-aspartate + H(+). The protein operates within pyrimidine metabolism; UMP biosynthesis via de novo pathway; (S)-dihydroorotate from bicarbonate: step 3/3. Its function is as follows. Catalyzes the reversible cyclization of carbamoyl aspartate to dihydroorotate. The protein is Dihydroorotase of Thermoplasma volcanium (strain ATCC 51530 / DSM 4299 / JCM 9571 / NBRC 15438 / GSS1).